A 380-amino-acid polypeptide reads, in one-letter code: Cystathionine gamma-synthase (380 aa).

At lysine 195 the chain carries N6-(pyridoxal phosphate)lysine.

It belongs to the trans-sulfuration enzymes family. In terms of assembly, homotetramer. Pyridoxal 5'-phosphate serves as cofactor.

The protein localises to the cytoplasm. The enzyme catalyses O-succinyl-L-homoserine + L-cysteine = L,L-cystathionine + succinate + H(+). Functionally, catalyzes the formation of L-cystathionine from O-succinyl-L-homoserine (OSHS) and L-cysteine, via a gamma-replacement reaction. In the absence of thiol, catalyzes gamma-elimination to form 2-oxobutanoate, succinate and ammonia. This is Cystathionine gamma-synthase (metB) from Helicobacter pylori (strain J99 / ATCC 700824) (Campylobacter pylori J99).